Reading from the N-terminus, the 46-residue chain is Putative antitoxin VapB3 (46 aa).

Belongs to the UPF0165 family.

In terms of biological role, possibly the antitoxin component of a type II toxin-antitoxin (TA) system. Its cognate toxin is VapC3 (Potential). The polypeptide is Putative antitoxin VapB3 (vapB3) (Pyrococcus furiosus (strain ATCC 43587 / DSM 3638 / JCM 8422 / Vc1)).